Reading from the N-terminus, the 304-residue chain is Non-specific ribonucleoside hydrolase RihC (304 aa).

The active site involves H233.

Belongs to the IUNH family. RihC subfamily.

Functionally, hydrolyzes both purine and pyrimidine ribonucleosides with a broad-substrate specificity. The sequence is that of Non-specific ribonucleoside hydrolase RihC from Escherichia coli O17:K52:H18 (strain UMN026 / ExPEC).